The chain runs to 102 residues: Small ribosomal subunit protein bS6 (102 aa).

It belongs to the bacterial ribosomal protein bS6 family.

Binds together with bS18 to 16S ribosomal RNA. This chain is Small ribosomal subunit protein bS6, found in Deinococcus deserti (strain DSM 17065 / CIP 109153 / LMG 22923 / VCD115).